The primary structure comprises 290 residues: ATP synthase gamma chain (290 aa).

The protein belongs to the ATPase gamma chain family. In terms of assembly, F-type ATPases have 2 components, CF(1) - the catalytic core - and CF(0) - the membrane proton channel. CF(1) has five subunits: alpha(3), beta(3), gamma(1), delta(1), epsilon(1). CF(0) has three main subunits: a, b and c.

It localises to the cell inner membrane. Functionally, produces ATP from ADP in the presence of a proton gradient across the membrane. The gamma chain is believed to be important in regulating ATPase activity and the flow of protons through the CF(0) complex. This is ATP synthase gamma chain from Delftia acidovorans (strain DSM 14801 / SPH-1).